A 186-amino-acid polypeptide reads, in one-letter code: Large ribosomal subunit protein uL5c (186 aa).

Belongs to the universal ribosomal protein uL5 family. In terms of assembly, part of the 50S ribosomal subunit; contacts the 5S rRNA.

The protein resides in the plastid. Its subcellular location is the chloroplast. Its function is as follows. Binds 5S rRNA, forms part of the central protuberance of the 50S subunit. The polypeptide is Large ribosomal subunit protein uL5c (rpl5) (Chaetosphaeridium globosum (Charophycean green alga)).